Reading from the N-terminus, the 1733-residue chain is Probable nuclear antigen (1733 aa).

Disordered regions lie at residues methionine 1–threonine 41, proline 71–valine 394, alanine 437–glutamine 506, alanine 520–alanine 548, leucine 882–leucine 907, alanine 993–alanine 1141, proline 1223–alanine 1242, glycine 1348–glycine 1475, serine 1585–glycine 1608, and proline 1630–cysteine 1665. The span at aspartate 21–proline 31 shows a compositional bias: basic residues. Over residues proline 77–proline 97 the composition is skewed to basic and acidic residues. Residues threonine 113 to proline 131 show a composition bias toward low complexity. Basic and acidic residues predominate over residues leucine 135–arginine 147. Over residues glycine 179–proline 189 the composition is skewed to pro residues. The segment covering serine 190–proline 201 has biased composition (low complexity). The span at serine 202–proline 220 shows a compositional bias: pro residues. Polar residues predominate over residues arginine 227–histidine 240. A compositionally biased stretch (pro residues) spans proline 272–alanine 299. Residues glycine 316–arginine 326 show a composition bias toward basic residues. Residues aspartate 336–alanine 354 are compositionally biased toward acidic residues. Over residues glutamate 355–glutamate 364 the composition is skewed to basic and acidic residues. 3 stretches are compositionally biased toward gly residues: residues glycine 365 to glycine 374, glycine 454 to glycine 466, and glycine 479 to valine 494. The segment covering glycine 495 to glutamine 506 has biased composition (low complexity). Residues leucine 882 to arginine 892 are compositionally biased toward gly residues. A compositionally biased stretch (low complexity) spans glycine 893–leucine 907. 2 stretches are compositionally biased toward gly residues: residues alanine 993–glycine 1004 and alanine 1027–proline 1043. 2 stretches are compositionally biased toward basic and acidic residues: residues glycine 1078–arginine 1087 and arginine 1100–leucine 1112. Residues glycine 1116–glycine 1127 show a composition bias toward gly residues. Gly residues predominate over residues glycine 1385–glycine 1407. 2 stretches are compositionally biased toward basic residues: residues proline 1408–arginine 1420 and arginine 1444–arginine 1453. Residues glycine 1454–alanine 1474 show a composition bias toward gly residues. The segment covering arginine 1652–cysteine 1665 has biased composition (gly residues).

The chain is Probable nuclear antigen from Sus scrofa (Pig).